The following is a 377-amino-acid chain: Succinyl-diaminopimelate desuccinylase (377 aa).

Residue histidine 67 participates in Zn(2+) binding. Aspartate 69 is a catalytic residue. Aspartate 100 provides a ligand contact to Zn(2+). Glutamate 134 acts as the Proton acceptor in catalysis. Positions 135, 163, and 349 each coordinate Zn(2+).

It belongs to the peptidase M20A family. DapE subfamily. In terms of assembly, homodimer. It depends on Zn(2+) as a cofactor. The cofactor is Co(2+).

It carries out the reaction N-succinyl-(2S,6S)-2,6-diaminopimelate + H2O = (2S,6S)-2,6-diaminopimelate + succinate. It participates in amino-acid biosynthesis; L-lysine biosynthesis via DAP pathway; LL-2,6-diaminopimelate from (S)-tetrahydrodipicolinate (succinylase route): step 3/3. Functionally, catalyzes the hydrolysis of N-succinyl-L,L-diaminopimelic acid (SDAP), forming succinate and LL-2,6-diaminopimelate (DAP), an intermediate involved in the bacterial biosynthesis of lysine and meso-diaminopimelic acid, an essential component of bacterial cell walls. In Haemophilus influenzae (strain PittGG), this protein is Succinyl-diaminopimelate desuccinylase.